We begin with the raw amino-acid sequence, 65 residues long: uncharacterized protein (65 aa).

The tract at residues Asn24 to Asp65 is disordered.

This is an uncharacterized protein from Dictyostelium discoideum (Social amoeba).